A 206-amino-acid chain; its full sequence is Cytochrome c (206 aa).

The next 3 membrane-spanning stretches (helical) occupy residues 10 to 30, 49 to 69, and 76 to 96; these read IALA…VSFL, FMGW…LGKM, and KWFL…FLSL. The heme site is built by Cys152, Cys155, His156, and Met182.

As to quaternary structure, monomer. Component of the photosynthetic reaction center composed of protein subunits PscA, PscC, PscB and PscD. The reaction center interacts with FmoA (which forms the Fenna-Matthews-Olson (FMO) complex). The reaction center/FmoA complex has two PscA subunits, one PscB and one PscD subunit, probably two FmoA complexes and at least one PscC subunit. Post-translationally, binds 1 heme group per subunit.

The protein localises to the cell inner membrane. In terms of biological role, monoheme cytochrome which is the immediate electron donor to P840 of the photosynthetic reaction center complex. The sequence is that of Cytochrome c (pscC) from Chlorobaculum tepidum (strain ATCC 49652 / DSM 12025 / NBRC 103806 / TLS) (Chlorobium tepidum).